Reading from the N-terminus, the 428-residue chain is Adenylosuccinate synthetase (428 aa).

GTP contacts are provided by residues Gly-12–Lys-18 and Gly-40–Thr-42. Asp-13 serves as the catalytic Proton acceptor. Positions 13 and 40 each coordinate Mg(2+). Residues Asp-13–Lys-16, Asn-38–His-41, Thr-130, Arg-144, Gln-224, Thr-239, and Arg-303 each bind IMP. Residue His-41 is the Proton donor of the active site. Position 299 to 305 (Val-299 to Arg-305) interacts with substrate. GTP is bound by residues Arg-305, Lys-331–Asp-333, and Gly-413–Gly-415.

The protein belongs to the adenylosuccinate synthetase family. As to quaternary structure, homodimer. It depends on Mg(2+) as a cofactor.

Its subcellular location is the cytoplasm. The enzyme catalyses IMP + L-aspartate + GTP = N(6)-(1,2-dicarboxyethyl)-AMP + GDP + phosphate + 2 H(+). It participates in purine metabolism; AMP biosynthesis via de novo pathway; AMP from IMP: step 1/2. Its function is as follows. Plays an important role in the de novo pathway of purine nucleotide biosynthesis. Catalyzes the first committed step in the biosynthesis of AMP from IMP. The sequence is that of Adenylosuccinate synthetase from Clostridium perfringens (strain 13 / Type A).